The chain runs to 81 residues: uncharacterized protein (81 aa).

Expressed in fetal brain.

This is an uncharacterized protein from Homo sapiens (Human).